Consider the following 263-residue polypeptide: Ribonuclease HII (263 aa).

The region spanning 71-262 (QAIAGIDEVG…VKSMCCDSTN (192 aa)) is the RNase H type-2 domain. 3 residues coordinate a divalent metal cation: aspartate 77, glutamate 78, and aspartate 172.

It belongs to the RNase HII family. Requires Mn(2+) as cofactor. Mg(2+) serves as cofactor.

The protein localises to the cytoplasm. It carries out the reaction Endonucleolytic cleavage to 5'-phosphomonoester.. Its function is as follows. Endonuclease that specifically degrades the RNA of RNA-DNA hybrids. The polypeptide is Ribonuclease HII (Streptococcus pyogenes serotype M3 (strain ATCC BAA-595 / MGAS315)).